A 1578-amino-acid chain; its full sequence is Bromodomain-containing protein DDB_G0270170 (1578 aa).

A compositionally biased stretch (acidic residues) spans 1–12; sequence MSLEQQDETVVE. Disordered regions lie at residues 1-39, 108-127, 151-285, and 319-454; these read MSLEQQDETVVEEETKTSFETNNSTANNTNNNTDNTYKE, NNNNGDENNKDIHDSSNNTE, HYSD…AKEL, and NENI…TTQT. The segment covering 18–35 has biased composition (low complexity); that stretch reads SFETNNSTANNTNNNTDN. Basic and acidic residues predominate over residues 152 to 163; that stretch reads YSDDESSKEKQD. Low complexity-rich tracts occupy residues 164–185 and 197–231; these read NINSNNNNNKNKNEQIINSENI and TTPSDTPPTLTNNTSSTTTTTTTNNTTTAATTTTN. Composition is skewed to polar residues over residues 319-332 and 340-351; these read NENIFSSSRKSTTK and TASTTNTPIITA. Over residues 352 to 383 the composition is skewed to low complexity; sequence QQNTTPLSPTQTTTTTTTPTTTTAQQNTPAQT. Polar residues predominate over residues 384-395; the sequence is ESKPPTTISINI. 2 stretches are compositionally biased toward low complexity: residues 396–407 and 417–433; these read KGSKSPKTTGGK and VVISQPVVPSTPVVATT. Over residues 443–454 the composition is skewed to polar residues; the sequence is STANNNSETTQT. Residues 479–506 are a coiled coil; the sequence is SDSATIQQLQQSISMLEDKIRLISSNNK. Disordered regions lie at residues 543 to 565 and 580 to 730; these read FTKSSTLAPPSSERKYSNLYSDD and IPIP…RMGK. Composition is skewed to low complexity over residues 604–653 and 660–686; these read NTST…PPQQ and TQQENTSSTTTTTTTTTTTTNTEDTTT. Positions 735-841 constitute a Bromo domain; the sequence is VVLTPVFKRC…DVFEKGFPKV (107 aa). The stretch at 851–903 forms a coiled coil; it reads KNVDQEKIEKLSNDLKNVTKELEKFKKDDSNSINNNNNNNNNYNNNNNNNNNN. Disordered stretches follow at residues 874-969, 1039-1167, 1184-1452, and 1480-1544; these read KFKK…KVTT, HALP…NNNN, SIPE…TDSA, and EREE…KGNM. 3 stretches are compositionally biased toward low complexity: residues 881-911, 918-961, and 1047-1061; these read NSINNNNNNNNNYNNNNNNNNNNSSSSSSRS, SSGS…SSNN, and SSTHSSHSSSHDSSS. One can recognise an NET domain in the interval 957–1039; that stretch reads SSSNNKKYPK…QYKNGEIPQH (83 aa). Over residues 1064 to 1077 the composition is skewed to basic and acidic residues; sequence REIEKLQKQLDRLG. A compositionally biased stretch (basic residues) spans 1092-1107; sequence HSKRISKPISKARGRK. Residues 1112–1167 are compositionally biased toward low complexity; sequence SSSNLNNSSNNINNNNNNINNYNNNNNYNNNNNNNLNNNNNNNINSNLNNNLNNNN. The stretch at 1113–1150 forms a coiled coil; the sequence is SSNLNNSSNNINNNNNNINNYNNNNNYNNNNNNNLNNN. Residues 1192 to 1204 show a composition bias toward acidic residues; that stretch reads TDISESSDSESDS. Composition is skewed to low complexity over residues 1205 to 1218 and 1231 to 1334; these read ESGSSDSSSSYSDS and YNNS…SLTN. The stretch at 1280–1308 forms a coiled coil; that stretch reads NSNNNNSNNNNNNVNNNNNNHNNNNHNNN. The span at 1356 to 1369 shows a compositional bias: polar residues; sequence SVASWSFDPTNNKE. A compositionally biased stretch (low complexity) spans 1370–1386; the sequence is SSSSSSTSSTSSTSNTT. Positions 1387–1399 are enriched in polar residues; the sequence is LTPIIQQSSLTHA. Composition is skewed to low complexity over residues 1400-1424 and 1432-1451; these read SSPISSSTFVSFSSSSSTPPTNNLS and NSPSINSPSSPSANNNNTDS. Positions 1462–1544 form a coiled coil; it reads TLKQKEKERV…EKLNNSKGNM (83 aa). Basic and acidic residues predominate over residues 1480–1538; it reads EREEKEEELKKEEEKKRIEMEEIKRLAKEKEEREAEETRKQIESERAAAREAREKEKLN.

The sequence is that of Bromodomain-containing protein DDB_G0270170 from Dictyostelium discoideum (Social amoeba).